The sequence spans 263 residues: Phosphate import ATP-binding protein PstB (263 aa).

In terms of domain architecture, ABC transporter spans 16 to 258 (VTARNVTVSY…PRDTRTQDYI (243 aa)). 48–55 (GPSGCGKS) lines the ATP pocket.

It belongs to the ABC transporter superfamily. Phosphate importer (TC 3.A.1.7) family. In terms of assembly, the complex is composed of two ATP-binding proteins (PstB), two transmembrane proteins (PstC and PstA) and a solute-binding protein (PstS).

It localises to the cell inner membrane. The enzyme catalyses phosphate(out) + ATP + H2O = ADP + 2 phosphate(in) + H(+). Its function is as follows. Part of the ABC transporter complex PstSACB involved in phosphate import. Responsible for energy coupling to the transport system. The polypeptide is Phosphate import ATP-binding protein PstB (Maricaulis maris (strain MCS10) (Caulobacter maris)).